The chain runs to 190 residues: Lipid A acyltransferase PagP (190 aa).

Residues 1-29 form the signal peptide; it reads MYVAMIIRKYFLIIALLLMPWLAIPSVSA. Residues His62, Asp105, and Ser106 contribute to the active site.

Belongs to the lipid A palmitoyltransferase family. In terms of assembly, homodimer.

Its subcellular location is the cell outer membrane. It carries out the reaction a lipid A + a 1,2-diacyl-sn-glycero-3-phosphocholine = a hepta-acyl lipid A + a 2-acyl-sn-glycero-3-phosphocholine. The catalysed reaction is a lipid IVA + a 1,2-diacyl-sn-glycero-3-phosphocholine = a lipid IVB + a 2-acyl-sn-glycero-3-phosphocholine. The enzyme catalyses a lipid IIA + a 1,2-diacyl-sn-glycero-3-phosphocholine = a lipid IIB + a 2-acyl-sn-glycero-3-phosphocholine. In terms of biological role, transfers a fatty acid residue from the sn-1 position of a phospholipid to the N-linked hydroxyfatty acid chain on the proximal unit of lipid A or its precursors. Required for resistance to cationic antimicrobial peptides (CAMPs). Modifications of lipid A with an acyl chain allow to evade host immune defenses by resisting antimicrobial peptides and attenuating the inflammatory response to infection triggered by lipopolysaccharide through the Toll-like receptor 4 (TLR4) signal transduction pathway. The polypeptide is Lipid A acyltransferase PagP (Salmonella typhimurium (strain LT2 / SGSC1412 / ATCC 700720)).